The sequence spans 362 residues: Probable cinnamyl alcohol dehydrogenase 8D (362 aa).

Residue Cys45 participates in Zn(2+) binding. NADP(+) is bound at residue Thr47. Zn(2+) is bound by residues His67, Glu68, Cys98, Cys101, Cys104, Cys112, and Cys161. NADP(+) contacts are provided by residues Thr165, Gly186–Gly191, Ser209–Lys214, Thr249, Gly273, and Asn296–Val298.

It belongs to the zinc-containing alcohol dehydrogenase family. Homodimer. Zn(2+) serves as cofactor.

It carries out the reaction (E)-cinnamyl alcohol + NADP(+) = (E)-cinnamaldehyde + NADPH + H(+). The catalysed reaction is (E)-coniferol + NADP(+) = (E)-coniferaldehyde + NADPH + H(+). The enzyme catalyses (E)-sinapyl alcohol + NADP(+) = (E)-sinapaldehyde + NADPH + H(+). It catalyses the reaction (E)-4-coumaroyl alcohol + NADP(+) = (E)-4-coumaraldehyde + NADPH + H(+). It carries out the reaction (E)-caffeyl alcohol + NADP(+) = (E)-caffeyl aldehyde + NADPH + H(+). It functions in the pathway aromatic compound metabolism; phenylpropanoid biosynthesis. Functionally, involved in lignin biosynthesis. Catalyzes the final step specific for the production of lignin monomers. Catalyzes the NADPH-dependent reduction of coniferaldehyde, 5-hydroxyconiferaldehyde, sinapaldehyde, 4-coumaraldehyde and caffeyl aldehyde to their respective alcohols. This chain is Probable cinnamyl alcohol dehydrogenase 8D, found in Oryza sativa subsp. japonica (Rice).